A 454-amino-acid chain; its full sequence is tRNA modification GTPase MnmE (454 aa).

The (6S)-5-formyl-5,6,7,8-tetrahydrofolate site is built by Arg-23, Glu-80, and Lys-120. One can recognise a TrmE-type G domain in the interval 216–377 (GMKVVIAGRP…LREHLKQSMG (162 aa)). Asn-226 is a K(+) binding site. Residues 226–231 (NAGKSS), 245–251 (TDIAGTT), and 270–273 (DTAG) contribute to the GTP site. Ser-230 provides a ligand contact to Mg(2+). K(+) is bound by residues Thr-245, Ile-247, and Thr-250. Residue Thr-251 coordinates Mg(2+). Lys-454 contributes to the (6S)-5-formyl-5,6,7,8-tetrahydrofolate binding site.

This sequence belongs to the TRAFAC class TrmE-Era-EngA-EngB-Septin-like GTPase superfamily. TrmE GTPase family. Homodimer. Heterotetramer of two MnmE and two MnmG subunits. It depends on K(+) as a cofactor.

Its subcellular location is the cytoplasm. Functionally, exhibits a very high intrinsic GTPase hydrolysis rate. Involved in the addition of a carboxymethylaminomethyl (cmnm) group at the wobble position (U34) of certain tRNAs, forming tRNA-cmnm(5)s(2)U34. The polypeptide is tRNA modification GTPase MnmE (Mannheimia succiniciproducens (strain KCTC 0769BP / MBEL55E)).